The chain runs to 602 residues: Elongation factor 4 (602 aa).

Residues 2 to 184 enclose the tr-type G domain; the sequence is KKIRNFAIIA…RIVRDIPPPK (183 aa). Residues 14–19 and 131–134 contribute to the GTP site; these read DHGKST and NKID.

The protein belongs to the TRAFAC class translation factor GTPase superfamily. Classic translation factor GTPase family. LepA subfamily.

The protein localises to the cell membrane. It catalyses the reaction GTP + H2O = GDP + phosphate + H(+). Required for accurate and efficient protein synthesis under certain stress conditions. May act as a fidelity factor of the translation reaction, by catalyzing a one-codon backward translocation of tRNAs on improperly translocated ribosomes. Back-translocation proceeds from a post-translocation (POST) complex to a pre-translocation (PRE) complex, thus giving elongation factor G a second chance to translocate the tRNAs correctly. Binds to ribosomes in a GTP-dependent manner. This chain is Elongation factor 4, found in Baumannia cicadellinicola subsp. Homalodisca coagulata.